Reading from the N-terminus, the 350-residue chain is Phosphoribosylformylglycinamidine cyclo-ligase (350 aa).

It belongs to the AIR synthase family.

It localises to the cytoplasm. It carries out the reaction 2-formamido-N(1)-(5-O-phospho-beta-D-ribosyl)acetamidine + ATP = 5-amino-1-(5-phospho-beta-D-ribosyl)imidazole + ADP + phosphate + H(+). The protein operates within purine metabolism; IMP biosynthesis via de novo pathway; 5-amino-1-(5-phospho-D-ribosyl)imidazole from N(2)-formyl-N(1)-(5-phospho-D-ribosyl)glycinamide: step 2/2. This is Phosphoribosylformylglycinamidine cyclo-ligase from Cupriavidus pinatubonensis (strain JMP 134 / LMG 1197) (Cupriavidus necator (strain JMP 134)).